The chain runs to 135 residues: Sex-regulated protein janus-A (135 aa).

K37 is a binding site for substrate. H63 (proton acceptor) is an active-site residue. 104–106 (SQG) serves as a coordination point for substrate.

This sequence belongs to the janus family.

JanA and janB regulate somatic sex differentiation. This chain is Sex-regulated protein janus-A (janA), found in Drosophila mauritiana (Fruit fly).